A 485-amino-acid polypeptide reads, in one-letter code: GlcNAc-binding protein A (485 aa).

The first 23 residues, Met1–Gly23, serve as a signal peptide directing secretion. Positions His24 to Phe201 constitute a Chitin-binding type-4 domain. Residues Ala437 to Trp478 form the Chitin-binding type-3 domain.

It belongs to the GbpA family.

It is found in the secreted. Probably interacts with GlcNAc residues. May promote attachment to both epithelial cell surfaces and chitin. The chain is GlcNAc-binding protein A from Vibrio cholerae serotype O1 (strain M66-2).